A 252-amino-acid polypeptide reads, in one-letter code: MKMTNNTVLITGGSAGIGLELAKRLLELGNEVIICGRSEARLAEAKQQLPNIHTKQCDVADRSQREALYEWALKEYPNLNVLVNNAGIQKEIDFKKGTEELFVDGDEIELNFQAPVHLSALFTPHLMKQPEAAIVQVTSGLAFNPLAVYPVYCATKAALHSFSLTLRHQLRDTSVEVIEMAPPMVDTGLNQKSRDKQGLTYRGISSEEYVQYFLDGLKEGKQEITNERVEGLRDATRADYDRLFEQMNTQEN.

An NADP(+)-binding site is contributed by 9–33; it reads LITGGSAGIGLELAKRLLELGNEVI. Position 139 (Ser-139) interacts with substrate. The Proton acceptor role is filled by Tyr-152.

The protein belongs to the short-chain dehydrogenases/reductases (SDR) family.

The protein localises to the cytoplasm. This is an uncharacterized protein from Bacillus subtilis (strain 168).